Reading from the N-terminus, the 829-residue chain is Cadherin-3 (829 aa).

A signal peptide spans 1-24; sequence MGLPRGPLASLLLLQVCWLQCAAS. Positions 25 to 107 are excised as a propeptide; it reads EPCRAVFREA…SKRILRRHKR (83 aa). Cadherin domains follow at residues 108–215, 216–328, 329–440, 441–546, and 547–650; these read DWVV…KPKF, TQDT…APMF, DPQK…APVF, VPPS…DHGP, and VPEP…CPGP. Over 108-654 the chain is Extracellular; the sequence is DWVVAPISVP…ETCPGPWKGG (547 aa). An N-linked (GlcNAc...) asparagine glycan is attached at N200. An N-linked (GlcNAc...) asparagine glycan is attached at N566. Residues 655 to 677 form a helical membrane-spanning segment; it reads FILPVLGAVLALLFLLLVLLLLV. The Cytoplasmic segment spans residues 678–829; the sequence is RKKRKIKEPL…ADMYGGGEDD (152 aa).

Interacts with CDCP1 and CTNNB1. Expressed in some normal epithelial tissues and in some carcinoma cell lines.

The protein localises to the cell membrane. Its function is as follows. Cadherins are calcium-dependent cell adhesion proteins. They preferentially interact with themselves in a homophilic manner in connecting cells; cadherins may thus contribute to the sorting of heterogeneous cell types. The chain is Cadherin-3 (CDH3) from Homo sapiens (Human).